Reading from the N-terminus, the 693-residue chain is Golgin subfamily A member 6B (693 aa).

Residues 1–11 (MWPQPYLPPHP) are compositionally biased toward pro residues. Disordered stretches follow at residues 1-72 (MWPQ…SQYQ), 497-551 (LPGE…VERR), 629-650 (NPAD…AGEQ), and 660-679 (NNVE…DNPT). Residues 77-611 (ALESSSVTIS…KLLELQELVL (535 aa)) are a coiled coil. Positions 537–551 (LPKEKADGTEQVERR) are enriched in basic and acidic residues.

It belongs to the GOLGA6 family.

The chain is Golgin subfamily A member 6B (GOLGA6B) from Homo sapiens (Human).